A 345-amino-acid polypeptide reads, in one-letter code: Peptidoglycan-recognition protein LE (345 aa).

Positions 1–16 (MSESGIKKLSQERTRE) are enriched in basic and acidic residues. Residues 1 to 38 (MSESGIKKLSQERTREWLASQEDEELESIAESSVVDSL) form a disordered region. 4 N-linked (GlcNAc...) asparagine glycosylation sites follow: N52, N95, N98, and N106. Residues 124–152 (NRRDRRHVSPPRDNAPKTPTHFEDDYQDE) are disordered. One can recognise an N-acetylmuramoyl-L-alanine amidase domain in the interval 198-324 (PVKYVVILHT…CQCNSTESPG (127 aa)). Residues H206, 229–240 (HIESRGWNDIAY), R254, 261–267 (AHTLGYN), and 314–322 (HCQCNSTES) contribute to the peptidoglycan site. N318 carries N-linked (GlcNAc...) asparagine glycosylation.

Belongs to the N-acetylmuramoyl-L-alanine amidase 2 family. As to quaternary structure, monomer. Peptidoglycan binding induces oligomerization. In terms of tissue distribution, expressed in hemolymph. Localizes at the lumenal surface of the trachea (at protein level).

It localises to the secreted. In terms of biological role, peptidoglycan-recognition protein that plays a key role in innate immunity by binding to murein peptidoglycans (PGN) of Gram-negative bacteria and activating the imd/Relish pathway. Has no activity against on Gram-positive bacteria. Binds to diaminopimelic acid-type PGN (DAP-type PGN), an activator of the imd/Relish pathway. Functions synergistically with PGRP-LC in producing resistance to E.coli and B.megaterium infections, which have the DAP-type peptidoglycan. Acts both upstream and in parallel with PGRP-LC in the imd/Relish pathway, and is required for infection-dependent activation of melanization. Required for Relish processing and nuclear translocation following proteolytic cleavage. Its localization suggests a role in the recognition and subsequent activation of the signaling at the first point of contact with invading bacteria. This chain is Peptidoglycan-recognition protein LE (PGRP-LE), found in Drosophila melanogaster (Fruit fly).